Reading from the N-terminus, the 256-residue chain is Cell division protein DivIB (256 aa).

The Cytoplasmic portion of the chain corresponds to 1–30 (MNNSKVIKLQDRVPKLKNQKKKNKKNVNHR). The helical transmembrane segment at 31-51 (LILYISILFLLVLFLIYFRSP) threads the bilayer. At 52–256 (LSNIKKISVF…KELGAEEKKE (205 aa)) the chain is on the extracellular side. Residues 53–121 (SNIKKISVFG…NNIDIHIEEY (69 aa)) form the POTRA domain.

Belongs to the FtsQ/DivIB family. DivIB subfamily.

The protein localises to the cell membrane. Its function is as follows. Cell division protein that may be involved in stabilizing or promoting the assembly of the division complex. In Bacillus cereus (strain ATCC 14579 / DSM 31 / CCUG 7414 / JCM 2152 / NBRC 15305 / NCIMB 9373 / NCTC 2599 / NRRL B-3711), this protein is Cell division protein DivIB.